A 546-amino-acid polypeptide reads, in one-letter code: uncharacterized protein (546 aa).

5 helical membrane passes run 4 to 23 (ILLENPLLVLFLVAAIGYPL), 30 to 47 (GSSLGVAAVLFVGLAMGS), 57 to 79 (IVYVLGLALFVYTIGLSSGPAFV), 91 to 113 (ALIIGMLLVAAGLVVGAQRLLGF), and 155 to 177 (PVVGYSVAYPMGVMGVVLAISLV). RCK C-terminal domains are found at residues 189–274 (GKRL…FLGE) and 275–359 (VSEE…FFGD). 6 helical membrane passes run 372 to 394 (FSLGLALGLLLGIIPIPLPGGIT), 399 to 421 (FAGGPLIVALILGTIGRSGSMVW), 434 to 456 (IGLVLFLAGVGTRAGYGFVTTLA), 460 to 482 (GLAIFAAGAVVTCLTALATLWIG), 489 to 511 (PMSILIGMVAGLQTQPAVLGYAL), and 521 to 543 (IGYASVYPVATISKILIVQILLT).

This sequence belongs to the AAE transporter (TC 2.A.81) family.

The protein localises to the cell membrane. This is an uncharacterized protein from Geobacter sulfurreducens (strain ATCC 51573 / DSM 12127 / PCA).